The primary structure comprises 325 residues: Phosphatidylglycerol--prolipoprotein diacylglyceryl transferase (325 aa).

Transmembrane regions (helical) follow at residues 19-39 (IPLRGYAFCIIIGVFVAVWFG), 47-67 (GGKAGTVADVAVWAVPFGLVG), 93-113 (IWEGGLGIWGAIAFGAVGAWI), and 119-139 (GIPLPAWADALAPGIAIAQAI). R141 lines the a 1,2-diacyl-sn-glycero-3-phospho-(1'-sn-glycerol) pocket. 3 consecutive transmembrane segments (helical) span residues 175-195 (HPTFLYESLWCIGVALLVIWA), 207-225 (FALYVAGYCAGRGWIEYMR), and 237-257 (LNVWTAIVVFILAVVYIVISA). Residues 266–312 (IVEPDRDATPAEKDGSGEDGSGEKGVAKADAAAKDPLTKDEPGKDAT) are compositionally biased toward basic and acidic residues. Residues 266–325 (IVEPDRDATPAEKDGSGEDGSGEKGVAKADAAAKDPLTKDEPGKDATAENAGAAGAAEKA) form a disordered region. Low complexity predominate over residues 313–325 (AENAGAAGAAEKA).

It belongs to the Lgt family.

It is found in the cell membrane. The enzyme catalyses L-cysteinyl-[prolipoprotein] + a 1,2-diacyl-sn-glycero-3-phospho-(1'-sn-glycerol) = an S-1,2-diacyl-sn-glyceryl-L-cysteinyl-[prolipoprotein] + sn-glycerol 1-phosphate + H(+). It functions in the pathway protein modification; lipoprotein biosynthesis (diacylglyceryl transfer). Its function is as follows. Catalyzes the transfer of the diacylglyceryl group from phosphatidylglycerol to the sulfhydryl group of the N-terminal cysteine of a prolipoprotein, the first step in the formation of mature lipoproteins. The polypeptide is Phosphatidylglycerol--prolipoprotein diacylglyceryl transferase (Streptomyces griseus subsp. griseus (strain JCM 4626 / CBS 651.72 / NBRC 13350 / KCC S-0626 / ISP 5235)).